A 249-amino-acid chain; its full sequence is Hydroxyacylglutathione hydrolase (249 aa).

Residues histidine 53, histidine 55, aspartate 57, histidine 58, histidine 110, aspartate 127, and histidine 165 each contribute to the Zn(2+) site.

It belongs to the metallo-beta-lactamase superfamily. Glyoxalase II family. In terms of assembly, monomer. Zn(2+) serves as cofactor.

The catalysed reaction is an S-(2-hydroxyacyl)glutathione + H2O = a 2-hydroxy carboxylate + glutathione + H(+). Its pathway is secondary metabolite metabolism; methylglyoxal degradation; (R)-lactate from methylglyoxal: step 2/2. In terms of biological role, thiolesterase that catalyzes the hydrolysis of S-D-lactoyl-glutathione to form glutathione and D-lactic acid. This is Hydroxyacylglutathione hydrolase from Buchnera aphidicola subsp. Baizongia pistaciae (strain Bp).